The primary structure comprises 123 residues: Small ribosomal subunit protein uS12 (123 aa).

3-methylthioaspartic acid is present on aspartate 89.

This sequence belongs to the universal ribosomal protein uS12 family. As to quaternary structure, part of the 30S ribosomal subunit. Contacts proteins S8 and S17. May interact with IF1 in the 30S initiation complex.

With S4 and S5 plays an important role in translational accuracy. In terms of biological role, interacts with and stabilizes bases of the 16S rRNA that are involved in tRNA selection in the A site and with the mRNA backbone. Located at the interface of the 30S and 50S subunits, it traverses the body of the 30S subunit contacting proteins on the other side and probably holding the rRNA structure together. The combined cluster of proteins S8, S12 and S17 appears to hold together the shoulder and platform of the 30S subunit. In Brucella anthropi (strain ATCC 49188 / DSM 6882 / CCUG 24695 / JCM 21032 / LMG 3331 / NBRC 15819 / NCTC 12168 / Alc 37) (Ochrobactrum anthropi), this protein is Small ribosomal subunit protein uS12.